The following is a 1159-amino-acid chain: Cation channel sperm-associated auxiliary subunit gamma (1159 aa).

An N-terminal signal peptide occupies residues 1–35 (MCGPAMFPAGPRWPRVRVLQVLWALLAVLLASRRL). Over 36–1065 (WAIKDFEECT…IHGLPLSPKR (1030 aa)) the chain is Extracellular. 2 disulfides stabilise this stretch: cysteine 44/cysteine 105 and cysteine 159/cysteine 165. An N-linked (GlcNAc...) asparagine glycan is attached at asparagine 102. Asparagine 177 carries N-linked (GlcNAc...) asparagine glycosylation. Residues cysteine 288 and cysteine 343 are joined by a disulfide bond. Residue asparagine 355 is glycosylated (N-linked (GlcNAc...) asparagine). A disulfide bridge links cysteine 394 with cysteine 402. Residues asparagine 426 and asparagine 574 are each glycosylated (N-linked (GlcNAc...) asparagine). 5 cysteine pairs are disulfide-bonded: cysteine 638-cysteine 860, cysteine 806-cysteine 834, cysteine 882-cysteine 1046, cysteine 909-cysteine 918, and cysteine 1010-cysteine 1016. The chain crosses the membrane as a helical span at residues 1066–1087 (ALFILMVSLSVFVGLVIFYIAF). The Cytoplasmic portion of the chain corresponds to 1088-1159 (CLLWPLVVKG…KEAVERQLMT (72 aa)). Residues 1138-1159 (FSSRMTEDKAEPKEAVERQLMT) form a disordered region. The span at 1142–1159 (MTEDKAEPKEAVERQLMT) shows a compositional bias: basic and acidic residues.

This sequence belongs to the CATSPERG family. As to quaternary structure, component of the CatSper complex or CatSpermasome composed of the core pore-forming members CATSPER1, CATSPER2, CATSPER3 and CATSPER4 as well as auxiliary members CATSPERB, CATSPERG, CATSPERD, CATSPERE, CATSPERZ, SCLO6C1, TMEM249, TMEM262 and EFCAB9. HSPA1 may be an additional auxiliary complex member. The core complex members CATSPER1, CATSPER2, CATSPER3 and CATSPER4 form a heterotetrameric channel. The auxiliary CATSPERB, CATSPERG, CATSPERD and CATSPERE subunits form a pavilion-like structure over the pore which stabilizes the complex through interactions with CATSPER4, CATSPER3, CATSPER1 and CATSPER2 respectively. TMEM262/CATSPERH interacts with CATSPERB, further stabilizing the complex. C2CD6/CATSPERT interacts at least with CATSPERD and is required for targeting the CatSper complex in the flagellar membrane.

It is found in the cell projection. It localises to the cilium. Its subcellular location is the flagellum membrane. Auxiliary component of the CatSper complex, a complex involved in sperm cell hyperactivation. Sperm cell hyperactivation is needed for sperm motility which is essential late in the preparation of sperm for fertilization. The polypeptide is Cation channel sperm-associated auxiliary subunit gamma (Macaca fascicularis (Crab-eating macaque)).